The primary structure comprises 271 residues: Dipeptidyl-peptidase 6 (271 aa).

SH3b domains follow at residues methionine 1–aspartate 64 and glutamine 72–isoleucine 140. A NlpC/P60 domain is found at histidine 148–glycine 268. Residue cysteine 178 is the Nucleophile of the active site. Catalysis depends on histidine 224, which acts as the Proton acceptor. Histidine 236 is a catalytic residue.

Belongs to the peptidase C40 family.

It is found in the cytoplasm. In terms of biological role, involved in cell sporulation. Hydrolyzes gamma-D-Glu-L-(meso)A2pm linkages only in those peptide units that have a free N-terminal L-alanine. This Lysinibacillus sphaericus (Bacillus sphaericus) protein is Dipeptidyl-peptidase 6.